The primary structure comprises 145 residues: MLKIIQGALDTRELLKAYQEEACAKNFGAFCVFVGIVRKEDNIQGLSFDIYEALLKTWFEKWHHKAKDLGVVLKMAHSLGDVLIGQSSFLCVSMGKNRKNALELYENFIEDFKHNAPIWKYDLIHNKRIYAKERSHPLKGSGLLA.

Substrate-binding positions include 36–38 (IVR), 97–98 (NR), Lys-113, and 120–122 (KYD).

Belongs to the MoaE family. Heterotetramer of 2 MoaD subunits and 2 MoaE subunits. Also stable as homodimer. The enzyme changes between these two forms during catalysis.

It catalyses the reaction 2 [molybdopterin-synthase sulfur-carrier protein]-C-terminal-Gly-aminoethanethioate + cyclic pyranopterin phosphate + H2O = molybdopterin + 2 [molybdopterin-synthase sulfur-carrier protein]-C-terminal Gly-Gly + 2 H(+). It participates in cofactor biosynthesis; molybdopterin biosynthesis. In terms of biological role, converts molybdopterin precursor Z into molybdopterin. This requires the incorporation of two sulfur atoms into precursor Z to generate a dithiolene group. The sulfur is provided by MoaD. The chain is Molybdopterin synthase catalytic subunit (moaE) from Helicobacter pylori (strain ATCC 700392 / 26695) (Campylobacter pylori).